A 528-amino-acid chain; its full sequence is Ribonuclease Y (528 aa).

Residues 15–35 traverse the membrane as a helical segment; sequence SLFFLALICGSIIGYFLYSFF. Residues 217–277 enclose the KH domain; it reads NISVVNIPNE…IRREIAKKTL (61 aa). Positions 343–436 constitute an HD domain; that stretch reads VLKHSLEVAF…VAIADTLSSA (94 aa).

Belongs to the RNase Y family.

The protein resides in the cell membrane. Endoribonuclease that initiates mRNA decay. This is Ribonuclease Y from Aster yellows witches'-broom phytoplasma (strain AYWB).